A 330-amino-acid polypeptide reads, in one-letter code: Beta-ketoacyl-[acyl-carrier-protein] synthase III (330 aa).

Active-site residues include Cys115 and His255. The tract at residues Gln256–Arg260 is ACP-binding. Asn285 is a catalytic residue.

This sequence belongs to the thiolase-like superfamily. FabH family. As to quaternary structure, homodimer.

It localises to the cytoplasm. It carries out the reaction malonyl-[ACP] + acetyl-CoA + H(+) = 3-oxobutanoyl-[ACP] + CO2 + CoA. The protein operates within lipid metabolism; fatty acid biosynthesis. In terms of biological role, catalyzes the condensation reaction of fatty acid synthesis by the addition to an acyl acceptor of two carbons from malonyl-ACP. Catalyzes the first condensation reaction which initiates fatty acid synthesis and may therefore play a role in governing the total rate of fatty acid production. Possesses both acetoacetyl-ACP synthase and acetyl transacylase activities. Its substrate specificity determines the biosynthesis of branched-chain and/or straight-chain of fatty acids. The chain is Beta-ketoacyl-[acyl-carrier-protein] synthase III from Helicobacter pylori (strain G27).